A 246-amino-acid polypeptide reads, in one-letter code: 5-oxoprolinase subunit A (246 aa).

This sequence belongs to the LamB/PxpA family. In terms of assembly, forms a complex composed of PxpA, PxpB and PxpC.

It catalyses the reaction 5-oxo-L-proline + ATP + 2 H2O = L-glutamate + ADP + phosphate + H(+). In terms of biological role, catalyzes the cleavage of 5-oxoproline to form L-glutamate coupled to the hydrolysis of ATP to ADP and inorganic phosphate. This is 5-oxoprolinase subunit A from Cupriavidus necator (strain ATCC 17699 / DSM 428 / KCTC 22496 / NCIMB 10442 / H16 / Stanier 337) (Ralstonia eutropha).